A 438-amino-acid polypeptide reads, in one-letter code: UDP-N-acetylmuramoylalanine--D-glutamate ligase (438 aa).

ATP is bound at residue 112–118 (GSNGKST).

Belongs to the MurCDEF family. Mg(2+) serves as cofactor.

It localises to the cytoplasm. The catalysed reaction is UDP-N-acetyl-alpha-D-muramoyl-L-alanine + D-glutamate + ATP = UDP-N-acetyl-alpha-D-muramoyl-L-alanyl-D-glutamate + ADP + phosphate + H(+). Its pathway is cell wall biogenesis; peptidoglycan biosynthesis. In terms of biological role, cell wall formation. Catalyzes the addition of glutamate to the nucleotide precursor UDP-N-acetylmuramoyl-L-alanine (UMA). The protein is UDP-N-acetylmuramoylalanine--D-glutamate ligase (murD) of Escherichia coli (strain K12).